The following is a 242-amino-acid chain: Enolase-phosphatase E1 (242 aa).

The protein belongs to the HAD-like hydrolase superfamily. MasA/MtnC family. Monomer. Requires Mg(2+) as cofactor.

The enzyme catalyses 5-methylsulfanyl-2,3-dioxopentyl phosphate + H2O = 1,2-dihydroxy-5-(methylsulfanyl)pent-1-en-3-one + phosphate. Its pathway is amino-acid biosynthesis; L-methionine biosynthesis via salvage pathway; L-methionine from S-methyl-5-thio-alpha-D-ribose 1-phosphate: step 3/6. The protein operates within amino-acid biosynthesis; L-methionine biosynthesis via salvage pathway; L-methionine from S-methyl-5-thio-alpha-D-ribose 1-phosphate: step 4/6. Bifunctional enzyme that catalyzes the enolization of 2,3-diketo-5-methylthiopentyl-1-phosphate (DK-MTP-1-P) into the intermediate 2-hydroxy-3-keto-5-methylthiopentenyl-1-phosphate (HK-MTPenyl-1-P), which is then dephosphorylated to form the acireductone 1,2-dihydroxy-3-keto-5-methylthiopentene (DHK-MTPene). The protein is Enolase-phosphatase E1 of Synechococcus sp. (strain WH7803).